Reading from the N-terminus, the 616-residue chain is Chaperone protein HscA (616 aa).

It belongs to the heat shock protein 70 family.

Chaperone involved in the maturation of iron-sulfur cluster-containing proteins. Has a low intrinsic ATPase activity which is markedly stimulated by HscB. Involved in the maturation of IscU. The protein is Chaperone protein HscA of Salmonella agona (strain SL483).